The primary structure comprises 568 residues: Proline--tRNA ligase (568 aa).

This sequence belongs to the class-II aminoacyl-tRNA synthetase family. ProS type 1 subfamily. Homodimer.

The protein localises to the cytoplasm. The catalysed reaction is tRNA(Pro) + L-proline + ATP = L-prolyl-tRNA(Pro) + AMP + diphosphate. In terms of biological role, catalyzes the attachment of proline to tRNA(Pro) in a two-step reaction: proline is first activated by ATP to form Pro-AMP and then transferred to the acceptor end of tRNA(Pro). As ProRS can inadvertently accommodate and process non-cognate amino acids such as alanine and cysteine, to avoid such errors it has two additional distinct editing activities against alanine. One activity is designated as 'pretransfer' editing and involves the tRNA(Pro)-independent hydrolysis of activated Ala-AMP. The other activity is designated 'posttransfer' editing and involves deacylation of mischarged Ala-tRNA(Pro). The misacylated Cys-tRNA(Pro) is not edited by ProRS. In Aliarcobacter butzleri (strain RM4018) (Arcobacter butzleri), this protein is Proline--tRNA ligase.